We begin with the raw amino-acid sequence, 512 residues long: Protein disulfide-isomerase (512 aa).

A signal peptide spans 1–24 (MAKNVAIFGLLFSLLLLVPSQIFA). The 120-residue stretch at 25–144 (EESSTDAKEF…IVEYLKKQSG (120 aa)) folds into the Thioredoxin 1 domain. Active-site nucleophile residues include Cys-62 and Cys-65. A disulfide bond links Cys-62 and Cys-65. Asn-278 carries an N-linked (GlcNAc...) asparagine glycan. One can recognise a Thioredoxin 2 domain in the interval 357–485 (YKDGKVEPFV…IIEFIEKNKD (129 aa)). Catalysis depends on nucleophile residues Cys-407 and Cys-410. A disulfide bond links Cys-407 and Cys-410. Over residues 487-496 (TGAAHQEVEQ) the composition is skewed to basic and acidic residues. The interval 487-512 (TGAAHQEVEQPKAAAQPEAEQPKDEL) is disordered. Residues 509–512 (KDEL) carry the Prevents secretion from ER motif.

It belongs to the protein disulfide isomerase family.

It localises to the endoplasmic reticulum lumen. The catalysed reaction is Catalyzes the rearrangement of -S-S- bonds in proteins.. Participates in the folding of proteins containing disulfide bonds, may be involved in glycosylation, prolyl hydroxylation and triglyceride transfer. The protein is Protein disulfide-isomerase (PDI) of Medicago sativa (Alfalfa).